Consider the following 405-residue polypeptide: Pentatricopeptide repeat-containing protein At3g14580, mitochondrial (405 aa).

The transit peptide at M1–R37 directs the protein to the mitochondrion. Residues N13–R44 form a disordered region. 8 PPR repeats span residues T94 to E124, S130 to P165, S166 to I200, D201 to P235, N236 to P270, D271 to P305, N306 to P340, and S341 to P375.

The protein belongs to the PPR family. P subfamily.

The protein localises to the mitochondrion. The protein is Pentatricopeptide repeat-containing protein At3g14580, mitochondrial of Arabidopsis thaliana (Mouse-ear cress).